Here is a 427-residue protein sequence, read N- to C-terminus: Serine--tRNA ligase (427 aa).

235–237 is an L-serine binding site; that stretch reads TSE. Position 266-268 (266-268) interacts with ATP; that stretch reads RSE. Glu289 contacts L-serine. 353–356 provides a ligand contact to ATP; the sequence is EISS. An L-serine-binding site is contributed by Ser388.

Belongs to the class-II aminoacyl-tRNA synthetase family. Type-1 seryl-tRNA synthetase subfamily. Homodimer. The tRNA molecule binds across the dimer.

The protein resides in the cytoplasm. It carries out the reaction tRNA(Ser) + L-serine + ATP = L-seryl-tRNA(Ser) + AMP + diphosphate + H(+). The enzyme catalyses tRNA(Sec) + L-serine + ATP = L-seryl-tRNA(Sec) + AMP + diphosphate + H(+). It functions in the pathway aminoacyl-tRNA biosynthesis; selenocysteinyl-tRNA(Sec) biosynthesis; L-seryl-tRNA(Sec) from L-serine and tRNA(Sec): step 1/1. In terms of biological role, catalyzes the attachment of serine to tRNA(Ser). Is also able to aminoacylate tRNA(Sec) with serine, to form the misacylated tRNA L-seryl-tRNA(Sec), which will be further converted into selenocysteinyl-tRNA(Sec). This is Serine--tRNA ligase from Chromobacterium violaceum (strain ATCC 12472 / DSM 30191 / JCM 1249 / CCUG 213 / NBRC 12614 / NCIMB 9131 / NCTC 9757 / MK).